The chain runs to 120 residues: Protein EPIDERMAL PATTERNING FACTOR 2 (120 aa).

The N-terminal stretch at 1–25 is a signal peptide; that stretch reads MTKFVRKYMFCLVLVFAACSLVVNS. 4 disulfide bridges follow: Cys-76–Cys-107, Cys-80–Cys-86, Cys-83–Cys-109, and Cys-95–Cys-101.

This sequence belongs to the plant cysteine rich small secretory peptide family. Epidermal patterning factor subfamily. In terms of assembly, interacts with ERECTA, ERL1 and TMM. In terms of tissue distribution, expressed in leaves, especially by the MMCs and their early descendants cells (stomatal lineage cells) including guard mother cells (GMCs).

It localises to the secreted. In terms of biological role, controls stomatal patterning. Regulates the number of cells that enter, and remain in, the stomatal lineage by inhibiting protodermal cells from adopting the meristemoid mother cell (MMC) fate in a non-cell-autonomous manner. Mediates stomatal development inhibition. MEPF2: mobile signal controlling stomatal development in a non-cell-autonomous manner. Uses ERECTA as major receptor. Inactivated by cleavage by CRSP (AC Q9LNU1). May act by competing with somatogen (AC Q9SV72) for the same receptor, TMM (AC Q9SSD1). The polypeptide is Protein EPIDERMAL PATTERNING FACTOR 2 (Arabidopsis thaliana (Mouse-ear cress)).